Reading from the N-terminus, the 637-residue chain is tRNA uridine 5-carboxymethylaminomethyl modification enzyme MnmG (637 aa).

18-23 (GAGHAG) serves as a coordination point for FAD. 281–295 (GPRYCPSIEDKIVRF) is an NAD(+) binding site.

It belongs to the MnmG family. In terms of assembly, homodimer. Heterotetramer of two MnmE and two MnmG subunits. The cofactor is FAD.

It localises to the cytoplasm. In terms of biological role, NAD-binding protein involved in the addition of a carboxymethylaminomethyl (cmnm) group at the wobble position (U34) of certain tRNAs, forming tRNA-cmnm(5)s(2)U34. This Ligilactobacillus salivarius (strain UCC118) (Lactobacillus salivarius) protein is tRNA uridine 5-carboxymethylaminomethyl modification enzyme MnmG.